Consider the following 133-residue polypeptide: MTMTDPVADMLTRLRNANSAYHDTVSMPSSKLKTRVAEILKAEGYIQDWREEEAEVGKKLTIDLKFGPQRERAIAGLRRISKPGLRVYAKSTNLPHVLGGLGIAILSTSSGLLTNQQAAKKAGVGGEVLAYVW.

It belongs to the universal ribosomal protein uS8 family. In terms of assembly, part of the 30S ribosomal subunit. Contacts proteins S5 and S12.

Functionally, one of the primary rRNA binding proteins, it binds directly to 16S rRNA central domain where it helps coordinate assembly of the platform of the 30S subunit. This is Small ribosomal subunit protein uS8 from Micrococcus luteus (Micrococcus lysodeikticus).